The sequence spans 403 residues: Histidine--tRNA ligase (403 aa).

This sequence belongs to the class-II aminoacyl-tRNA synthetase family. As to quaternary structure, homodimer.

Its subcellular location is the cytoplasm. It carries out the reaction tRNA(His) + L-histidine + ATP = L-histidyl-tRNA(His) + AMP + diphosphate + H(+). This Aquifex aeolicus (strain VF5) protein is Histidine--tRNA ligase (hisS).